A 1379-amino-acid chain; its full sequence is DNA-directed RNA polymerase subunit beta (1379 aa).

Belongs to the RNA polymerase beta chain family. As to quaternary structure, the RNAP catalytic core consists of 2 alpha, 1 beta, 1 beta' and 1 omega subunit. When a sigma factor is associated with the core the holoenzyme is formed, which can initiate transcription.

The catalysed reaction is RNA(n) + a ribonucleoside 5'-triphosphate = RNA(n+1) + diphosphate. DNA-dependent RNA polymerase catalyzes the transcription of DNA into RNA using the four ribonucleoside triphosphates as substrates. In Rhizobium leguminosarum bv. trifolii (strain WSM2304), this protein is DNA-directed RNA polymerase subunit beta.